A 477-amino-acid chain; its full sequence is Trigger factor (477 aa).

The region spanning 169 to 254 is the PPIase FKBP-type domain; it reads EDRVTIDYLG…VKEVAKPNEL (86 aa). The tract at residues 435–477 is disordered; it reads VSKEELTAEDEDAASEAKPAKKAAPKKKAAPKKKADEGKSEEA. Positions 454–466 are enriched in basic residues; the sequence is AKKAAPKKKAAPK. The span at 467 to 477 shows a compositional bias: basic and acidic residues; that stretch reads KKADEGKSEEA.

This sequence belongs to the FKBP-type PPIase family. Tig subfamily.

It is found in the cytoplasm. It carries out the reaction [protein]-peptidylproline (omega=180) = [protein]-peptidylproline (omega=0). Its function is as follows. Involved in protein export. Acts as a chaperone by maintaining the newly synthesized protein in an open conformation. Functions as a peptidyl-prolyl cis-trans isomerase. In Brucella anthropi (strain ATCC 49188 / DSM 6882 / CCUG 24695 / JCM 21032 / LMG 3331 / NBRC 15819 / NCTC 12168 / Alc 37) (Ochrobactrum anthropi), this protein is Trigger factor.